The sequence spans 150 residues: MAKLILTHEVTGLGAAGDVVEVKDGYARNFLLPRGFALTWSKGGEKQVESIKAARVAREHASLEDAQKQAAALSAKPVKLVVKAGETGRLFGTVKQGDVADAVEAAGLGRIDKRKVELPAHIKSVGSYQANVRLHDDVAAVIELDVVAGK.

Belongs to the bacterial ribosomal protein bL9 family.

Binds to the 23S rRNA. The polypeptide is Large ribosomal subunit protein bL9 (Arthrobacter sp. (strain FB24)).